Reading from the N-terminus, the 537-residue chain is Glucan 1,6-alpha-glucosidase (537 aa).

The active-site Nucleophile is Asp194. The Proton donor role is filled by Glu236.

The protein belongs to the glycosyl hydrolase 13 family.

It is found in the cytoplasm. It catalyses the reaction Hydrolysis of (1-&gt;6)-alpha-D-glucosidic linkages in (1-&gt;6)-alpha-D-glucans and derived oligosaccharides.. Functionally, the physiological substrates may be short isomaltosaccharides. This chain is Glucan 1,6-alpha-glucosidase (dexB), found in Streptococcus dysgalactiae subsp. equisimilis (Streptococcus equisimilis).